Here is an 83-residue protein sequence, read N- to C-terminus: MGIFQRLMKNKELIPLAFFISAAATGASSFALYALKKTDVVIDRKRNPEPWETVDPTQPQKLLTINQEWKPVEELQRVRRATR.

This sequence belongs to the complex I NDUFA4 subunit family.

It is found in the nucleus. The polypeptide is Normal mucosa of esophagus-specific gene 1 protein (Nmes1) (Rattus norvegicus (Rat)).